The chain runs to 206 residues: Pyridoxine/pyridoxamine 5'-phosphate oxidase (206 aa).

FMN is bound by residues 53 to 58 (RMVLLK), 68 to 69 (YT), Lys75, and Gln97. Lys58 is a substrate binding site. Residues Tyr115, Arg119, and Ser123 each contribute to the substrate site. FMN-binding positions include 132 to 133 (QS) and Trp177. Residue 183 to 185 (RLH) participates in substrate binding. Position 187 (Arg187) interacts with FMN.

The protein belongs to the pyridoxamine 5'-phosphate oxidase family. In terms of assembly, homodimer. FMN serves as cofactor.

The enzyme catalyses pyridoxamine 5'-phosphate + O2 + H2O = pyridoxal 5'-phosphate + H2O2 + NH4(+). It carries out the reaction pyridoxine 5'-phosphate + O2 = pyridoxal 5'-phosphate + H2O2. It participates in cofactor metabolism; pyridoxal 5'-phosphate salvage; pyridoxal 5'-phosphate from pyridoxamine 5'-phosphate: step 1/1. It functions in the pathway cofactor metabolism; pyridoxal 5'-phosphate salvage; pyridoxal 5'-phosphate from pyridoxine 5'-phosphate: step 1/1. Catalyzes the oxidation of either pyridoxine 5'-phosphate (PNP) or pyridoxamine 5'-phosphate (PMP) into pyridoxal 5'-phosphate (PLP). The chain is Pyridoxine/pyridoxamine 5'-phosphate oxidase from Rhizobium etli (strain CIAT 652).